Here is a 106-residue protein sequence, read N- to C-terminus: Large ribosomal subunit protein bL31B (106 aa).

Residues 85–106 are disordered; sequence PVQVAEEPVAKGKKKPSLKKKK. Residues 95–106 show a composition bias toward basic residues; the sequence is KGKKKPSLKKKK.

The protein belongs to the bacterial ribosomal protein bL31 family. Type B subfamily. Part of the 50S ribosomal subunit.

The sequence is that of Large ribosomal subunit protein bL31B from Chlamydia felis (strain Fe/C-56) (Chlamydophila felis).